A 953-amino-acid polypeptide reads, in one-letter code: 26S proteasome non-ATPase regulatory subunit 1 (953 aa).

Met1 is modified (N-acetylmethionine). Thr273 is subject to Phosphothreonine. The disordered stretch occupies residues 279 to 318 (PGSTNTGTVPGSEKDSDSMETEEKTSSAFVGKTPEASPEP). Ser290 carries the post-translational modification Phosphoserine. Positions 290–303 (SEKDSDSMETEEKT) are enriched in basic and acidic residues. Lys310 carries the post-translational modification N6-acetyllysine. Thr311 is modified (phosphothreonine). The residue at position 315 (Ser315) is a Phosphoserine. 10 PC repeats span residues 403-436 (TATA…PGSA), 441-474 (GGLY…DIVR), 476-510 (GGSL…VTGE), 511-545 (AAGL…EKIL), 547-580 (GLAV…ILRR), 581-616 (SGMY…DVRR), 617-649 (AAVE…PHVR), 651-685 (GAAM…YVRQ), 686-726 (GALI…DVMA), and 729-761 (GAIL…PSVV). Lys720 is subject to N6-acetyllysine. Thr830 is modified (phosphothreonine). Ser834 bears the Phosphoserine mark. 2 disordered regions span residues 839 to 881 (AKKK…LDNP) and 930 to 953 (AHGP…YIDD). Basic and acidic residues-rich tracts occupy residues 842–852 (KEKEKEKKEEE) and 859–872 (AEKK…KEPE). Acidic residues predominate over residues 936–953 (EEEEQEPEPPEPFEYIDD).

Belongs to the proteasome subunit S1 family. Component of the 19S proteasome regulatory particle complex. The 26S proteasome consists of a 20S core particle (CP) and two 19S regulatory subunits (RP). The regulatory particle is made of a lid composed of 9 subunits, a base containing 6 ATPases and few additional components including PSMD1. Interacts with ADRM1. Interacts with ZFAND1.

Component of the 26S proteasome, a multiprotein complex involved in the ATP-dependent degradation of ubiquitinated proteins. This complex plays a key role in the maintenance of protein homeostasis by removing misfolded or damaged proteins, which could impair cellular functions, and by removing proteins whose functions are no longer required. Therefore, the proteasome participates in numerous cellular processes, including cell cycle progression, apoptosis, or DNA damage repair. This Homo sapiens (Human) protein is 26S proteasome non-ATPase regulatory subunit 1 (PSMD1).